Here is a 231-residue protein sequence, read N- to C-terminus: Sugar fermentation stimulation protein homolog (231 aa).

It belongs to the SfsA family.

The polypeptide is Sugar fermentation stimulation protein homolog (Geobacter sp. (strain M21)).